The following is a 103-amino-acid chain: MGNIFSPTHLIVILLIIIVLFGRGKVSELMGDVAKGIKAFKKNMKDEEDILEDKLERAHHSETVDVEPQKFQSLSVKRATTRVKGSSSSRKGKTSVVKKQRVK.

The chain crosses the membrane as a helical span at residues 1-21 (MGNIFSPTHLIVILLIIIVLF). Residues 77–103 (KRATTRVKGSSSSRKGKTSVVKKQRVK) form a disordered region. A compositionally biased stretch (basic residues) spans 90–103 (RKGKTSVVKKQRVK).

The protein belongs to the TatA/E family. The Tat system comprises two distinct complexes: a TatABC complex, containing multiple copies of TatA, TatB and TatC subunits, and a separate TatA complex, containing only TatA subunits. Substrates initially bind to the TatABC complex, which probably triggers association of the separate TatA complex to form the active translocon.

It localises to the cell inner membrane. Functionally, part of the twin-arginine translocation (Tat) system that transports large folded proteins containing a characteristic twin-arginine motif in their signal peptide across membranes. TatA could form the protein-conducting channel of the Tat system. This chain is Sec-independent protein translocase protein TatA, found in Bartonella henselae (strain ATCC 49882 / DSM 28221 / CCUG 30454 / Houston 1) (Rochalimaea henselae).